A 315-amino-acid polypeptide reads, in one-letter code: MSESLRIIFAGTPDFAARHLDALLSSGHNVVGVFTQPDRPAGRGKKLMPSPVKVLAEEKGLPVFQPVSLRPQESQQLVADLQADVMVVVAYGLILPKAVLEMPRLGCINVHGSLLPRWRGAAPIQRSLWAGDAETGVTIMQMDVGLDTGDMLYKLSCPITAEDTSGTLYDKLAELGPQGLITTLKQLADGTAKPEVQDETLVTYAEKLSKEEARIDWSLSAAQLERCIRAFNPWPMSWLEIEGQPVKVWKASVIDTATNAAPGTILEANKQGIQVATGDGILNLLSLQPAGKKAMSAQDLLNSRREWFVPGNRLA.

113–116 (SLLP) contacts (6S)-5,6,7,8-tetrahydrofolate.

The protein belongs to the Fmt family.

It carries out the reaction L-methionyl-tRNA(fMet) + (6R)-10-formyltetrahydrofolate = N-formyl-L-methionyl-tRNA(fMet) + (6S)-5,6,7,8-tetrahydrofolate + H(+). Attaches a formyl group to the free amino group of methionyl-tRNA(fMet). The formyl group appears to play a dual role in the initiator identity of N-formylmethionyl-tRNA by promoting its recognition by IF2 and preventing the misappropriation of this tRNA by the elongation apparatus. The sequence is that of Methionyl-tRNA formyltransferase from Shigella sonnei (strain Ss046).